We begin with the raw amino-acid sequence, 543 residues long: Dipeptide-binding protein DppE (543 aa).

Residues 1 to 22 (MKRVKKLWGMGLALGLSFALMG) form the signal peptide. Cysteine 23 carries the N-palmitoyl cysteine lipid modification. Cysteine 23 carries the S-diacylglycerol cysteine lipid modification.

Belongs to the bacterial solute-binding protein 5 family.

Its subcellular location is the cell membrane. Its function is as follows. Probably part of the ABC transporter DppBCDE involved in dipeptide transport. The polypeptide is Dipeptide-binding protein DppE (dppE) (Bacillus subtilis (strain 168)).